The primary structure comprises 198 residues: Twist-related protein 1 (198 aa).

A compositionally biased stretch (low complexity) spans 1 to 18; that stretch reads MMQDVSSSPVSPADDSLS. The disordered stretch occupies residues 1-101; the sequence is MMQDVSSSPV…GGGSPQSYEE (101 aa). The segment covering 34-43 has biased composition (basic residues); that stretch reads RGGRKRRSSR. Gly residues-rich tracts occupy residues 46–64 and 79–95; these read AGGG…GGDE and GCGG…GGGS. The region spanning 104-155 is the bHLH domain; the sequence is TQRVMANVRERQRTQSLNEAFAALRKIIPTLPSDKLSKIQTLKLAARYIDFL. The segment at 157-187 is sufficient for transactivation activity; the sequence is QVLQSDELDSKMASCSYVAHERLSYAFSVWR.

Efficient DNA binding requires dimerization with another bHLH protein. Homodimer or heterodimer with E proteins such as TCF3. ID1 binds preferentially to TCF3 but does not interact efficiently with TWIST1 so ID1 levels control the amount of TCF3 available to dimerize with TWIST and thus determine the type of dimer formed.

The protein resides in the nucleus. Acts as a transcriptional regulator. Inhibits myogenesis by sequestrating E proteins, inhibiting trans-activation by MEF2, and inhibiting DNA-binding by MYOD1 through physical interaction. This interaction probably involves the basic domains of both proteins. Also represses expression of pro-inflammatory cytokines such as TNFA and IL1B. Regulates cranial suture patterning and fusion. Activates transcription as a heterodimer with E proteins. Regulates gene expression differentially, depending on dimer composition. Homodimers induce expression of FGFR2 and POSTN while heterodimers repress FGFR2 and POSTN expression and induce THBS1 expression. Heterodimerization is also required for osteoblast differentiation. Represses the activity of the circadian transcriptional activator: NPAS2-BMAL1 heterodimer. The chain is Twist-related protein 1 (TWIST1) from Eulemur fulvus fulvus (Brown lemur).